Consider the following 259-residue polypeptide: Putative deoxyribonuclease TATDN1 homolog (259 aa).

The a divalent metal cation site is built by E82, H116, H138, and D186.

Belongs to the metallo-dependent hydrolases superfamily. TatD-type hydrolase family. The cofactor is a divalent metal cation.

The protein localises to the nucleus. Functionally, putative deoxyribonuclease. This is Putative deoxyribonuclease TATDN1 homolog from Vairimorpha ceranae (strain BRL01) (Microsporidian parasite).